A 248-amino-acid polypeptide reads, in one-letter code: Large ribosomal subunit protein uL10m (248 aa).

Residues 1–24 (MATLIQRSLSLAKSSTPALQFLRF) constitute a mitochondrion transit peptide.

This sequence belongs to the universal ribosomal protein uL10 family. In terms of assembly, component of the mitochondrial ribosome large subunit (39S) which comprises a 16S rRNA and about 50 distinct proteins.

The protein localises to the mitochondrion. The sequence is that of Large ribosomal subunit protein uL10m (mRpL10) from Drosophila melanogaster (Fruit fly).